We begin with the raw amino-acid sequence, 142 residues long: Large ribosomal subunit protein uL13 (142 aa).

This sequence belongs to the universal ribosomal protein uL13 family. Part of the 50S ribosomal subunit.

In terms of biological role, this protein is one of the early assembly proteins of the 50S ribosomal subunit, although it is not seen to bind rRNA by itself. It is important during the early stages of 50S assembly. In Aliivibrio salmonicida (strain LFI1238) (Vibrio salmonicida (strain LFI1238)), this protein is Large ribosomal subunit protein uL13.